The chain runs to 156 residues: Small ribosomal subunit protein uS7 (156 aa).

This sequence belongs to the universal ribosomal protein uS7 family. In terms of assembly, part of the 30S ribosomal subunit. Contacts proteins S9 and S11.

One of the primary rRNA binding proteins, it binds directly to 16S rRNA where it nucleates assembly of the head domain of the 30S subunit. Is located at the subunit interface close to the decoding center, probably blocks exit of the E-site tRNA. The polypeptide is Small ribosomal subunit protein uS7 (Mycobacterium leprae (strain Br4923)).